Reading from the N-terminus, the 413-residue chain is Multifunctional CCA protein (413 aa).

ATP-binding residues include G8 and R11. G8 and R11 together coordinate CTP. Mg(2+) is bound by residues D21 and D23. ATP contacts are provided by R91, R143, and R146. CTP-binding residues include R91, R143, and R146. Positions 232 to 333 (TGVHVMMVVD…VRLFERSDAL (102 aa)) constitute an HD domain.

Belongs to the tRNA nucleotidyltransferase/poly(A) polymerase family. Bacterial CCA-adding enzyme type 1 subfamily. As to quaternary structure, monomer. Can also form homodimers and oligomers. Mg(2+) serves as cofactor. The cofactor is Ni(2+).

The enzyme catalyses a tRNA precursor + 2 CTP + ATP = a tRNA with a 3' CCA end + 3 diphosphate. It carries out the reaction a tRNA with a 3' CCA end + 2 CTP + ATP = a tRNA with a 3' CCACCA end + 3 diphosphate. Functionally, catalyzes the addition and repair of the essential 3'-terminal CCA sequence in tRNAs without using a nucleic acid template. Adds these three nucleotides in the order of C, C, and A to the tRNA nucleotide-73, using CTP and ATP as substrates and producing inorganic pyrophosphate. tRNA 3'-terminal CCA addition is required both for tRNA processing and repair. Also involved in tRNA surveillance by mediating tandem CCA addition to generate a CCACCA at the 3' terminus of unstable tRNAs. While stable tRNAs receive only 3'-terminal CCA, unstable tRNAs are marked with CCACCA and rapidly degraded. In Burkholderia cenocepacia (strain ATCC BAA-245 / DSM 16553 / LMG 16656 / NCTC 13227 / J2315 / CF5610) (Burkholderia cepacia (strain J2315)), this protein is Multifunctional CCA protein.